A 46-amino-acid chain; its full sequence is Denclatoxin-B (46 aa).

3 disulfides stabilise this stretch: Cys-3/Cys-40, Cys-4/Cys-32, and Cys-16/Cys-26.

Belongs to the plant thionin (TC 1.C.44) family.

The protein resides in the secreted. Functionally, thionins are small plant proteins which are toxic to animal cells. They seem to exert their toxic effect at the level of the cell membrane. Their precise function is not known. The chain is Denclatoxin-B from Dendrophthora clavata (Columbian mistletoe).